The following is a 68-amino-acid chain: Large ribosomal subunit protein uL30 (68 aa).

The protein belongs to the universal ribosomal protein uL30 family. In terms of assembly, part of the 50S ribosomal subunit.

The sequence is that of Large ribosomal subunit protein uL30 from Bartonella henselae (strain ATCC 49882 / DSM 28221 / CCUG 30454 / Houston 1) (Rochalimaea henselae).